A 403-amino-acid chain; its full sequence is MTGEEWGLTVLSFLVRVGFFLFGIYQDANFKVRYTDIDYFVFHDAAKYVYEGKSPYARDTYRYTPLLSWLLVPNHYFGWFHLGKVIFVIFDLVTGLIIMKLLNQAISRKRALILESIWLLNPMVITISTRGNAESVLCCLIMFTLFFLQKSRYTLAGILYGLSIHFKIYPIIYCIPIAIFIYYNKRNQGPRTQLTSLLNIGLSTLTTLLGCGWAMYKIYGYEFLDQAYLYHLYRTDHRHNFSVWNMLLYLDSANKENGESNLSRYAFVPQLLLVLVTGCLEWWNPTFDNLLRVLFVQTFAFVTYNKVCTSQYFVWYLIFLPFYLSRTHIGWKKGLLMATLWVGTQGIWLSQGYYLEFEGKNVFYPGLFIASVLFFVTNVWLLGQFITDIKIPTQPTVSNKKNN.

The Cytoplasmic segment spans residues 1–4 (MTGE). Residues 5 to 25 (EWGLTVLSFLVRVGFFLFGIY) traverse the membrane as a helical segment. The Lumenal portion of the chain corresponds to 26–78 (QDANFKVRYTDIDYFVFHDAAKYVYEGKSPYARDTYRYTPLLSWLLVPNHYFG). Residues 79 to 99 (WFHLGKVIFVIFDLVTGLIIM) form a helical membrane-spanning segment. The Cytoplasmic portion of the chain corresponds to 100–110 (KLLNQAISRKR). A helical transmembrane segment spans residues 111-131 (ALILESIWLLNPMVITISTRG). A topological domain (lumenal) is located at residue Asn-132. A helical transmembrane segment spans residues 133–149 (AESVLCCLIMFTLFFLQ). Residues 150–160 (KSRYTLAGILY) are Cytoplasmic-facing. Residues 161 to 181 (GLSIHFKIYPIIYCIPIAIFI) form a helical membrane-spanning segment. At 182–193 (YYNKRNQGPRTQ) the chain is on the lumenal side. Residues 194 to 214 (LTSLLNIGLSTLTTLLGCGWA) form a helical membrane-spanning segment. The Cytoplasmic portion of the chain corresponds to 215–266 (MYKIYGYEFLDQAYLYHLYRTDHRHNFSVWNMLLYLDSANKENGESNLSRYA). The chain crosses the membrane as a helical span at residues 267–287 (FVPQLLLVLVTGCLEWWNPTF). Residues 288–310 (DNLLRVLFVQTFAFVTYNKVCTS) lie on the Lumenal side of the membrane. A helical transmembrane segment spans residues 311 to 331 (QYFVWYLIFLPFYLSRTHIGW). The Cytoplasmic segment spans residues 332–334 (KKG). The helical transmembrane segment at 335–355 (LLMATLWVGTQGIWLSQGYYL) threads the bilayer. Topologically, residues 356–361 (EFEGKN) are lumenal. The helical transmembrane segment at 362 to 382 (VFYPGLFIASVLFFVTNVWLL) threads the bilayer. At 383-403 (GQFITDIKIPTQPTVSNKKNN) the chain is on the cytoplasmic side.

The protein belongs to the PIGM family.

The protein resides in the endoplasmic reticulum membrane. Its pathway is glycolipid biosynthesis; glycosylphosphatidylinositol-anchor biosynthesis. Its function is as follows. Mannosyltransferase involved in glycosylphosphatidylinositol-anchor biosynthesis. Transfers the first alpha-1,4-mannose to GlcN-acyl-PI during GPI precursor assembly. Required for cell wall integrity. In Saccharomyces cerevisiae (strain ATCC 204508 / S288c) (Baker's yeast), this protein is GPI mannosyltransferase 1 (GPI14).